Consider the following 196-residue polypeptide: Small ribosomal subunit protein uS4c (196 aa).

A disordered region spans residues 16–36 (GTLPGLTSKRPKSGSDLKTQL). Residues 89–150 (MRLDNILFRL…KQRSKALIQN (62 aa)) enclose the S4 RNA-binding domain.

Belongs to the universal ribosomal protein uS4 family. As to quaternary structure, part of the 30S ribosomal subunit. Contacts protein S5. The interaction surface between S4 and S5 is involved in control of translational fidelity.

The protein resides in the plastid. It localises to the chloroplast. Its function is as follows. One of the primary rRNA binding proteins, it binds directly to 16S rRNA where it nucleates assembly of the body of the 30S subunit. Functionally, with S5 and S12 plays an important role in translational accuracy. This Rhapis humilis (Slender lady palm) protein is Small ribosomal subunit protein uS4c (rps4).